We begin with the raw amino-acid sequence, 358 residues long: UDP-3-O-acylglucosamine N-acyltransferase (358 aa).

H248 functions as the Proton acceptor in the catalytic mechanism.

The protein belongs to the transferase hexapeptide repeat family. LpxD subfamily. As to quaternary structure, homotrimer.

The enzyme catalyses a UDP-3-O-[(3R)-3-hydroxyacyl]-alpha-D-glucosamine + a (3R)-hydroxyacyl-[ACP] = a UDP-2-N,3-O-bis[(3R)-3-hydroxyacyl]-alpha-D-glucosamine + holo-[ACP] + H(+). It functions in the pathway bacterial outer membrane biogenesis; LPS lipid A biosynthesis. Functionally, catalyzes the N-acylation of UDP-3-O-acylglucosamine using 3-hydroxyacyl-ACP as the acyl donor. Is involved in the biosynthesis of lipid A, a phosphorylated glycolipid that anchors the lipopolysaccharide to the outer membrane of the cell. This is UDP-3-O-acylglucosamine N-acyltransferase from Synechococcus sp. (strain WH7803).